Here is an 803-residue protein sequence, read N- to C-terminus: Leucine--tRNA ligase (803 aa).

The 'HIGH' region signature appears at 40 to 51 (PYPSGQGLHVGH). Positions 575–579 (KMSKS) match the 'KMSKS' region motif. Lys578 lines the ATP pocket.

It belongs to the class-I aminoacyl-tRNA synthetase family.

It localises to the cytoplasm. The enzyme catalyses tRNA(Leu) + L-leucine + ATP = L-leucyl-tRNA(Leu) + AMP + diphosphate. The protein is Leucine--tRNA ligase of Lacticaseibacillus paracasei (strain ATCC 334 / BCRC 17002 / CCUG 31169 / CIP 107868 / KCTC 3260 / NRRL B-441) (Lactobacillus paracasei).